A 192-amino-acid polypeptide reads, in one-letter code: ER protein translocation subcomplex subunit sec67 (192 aa).

Component of the heterotetrameric Sec62/63complex composed of sec62, sec63, sec66 and sec72. The Sec62/63 complex associates with the Sec61 complex to form the Sec complex.

The protein localises to the cytoplasm. It localises to the nucleus. Its function is as follows. Acts as a non-essential component of the Sec62/63 complex which is involved in SRP-independent post-translational translocation across the endoplasmic reticulum (ER) and functions together with the Sec61 complex and bip1 in a channel-forming translocon complex. A cycle of assembly and disassembly of Sec62/63 complex from sec61 may govern the activity of the translocon. sec72 may be involved in signal peptide recognition for a defined subset of leader peptides, or may increase the efficiency of unusual or 'difficult' secretory precursors to the translocation pore, it may be that this protein binds charged leader peptides to the membrane until they engage the translocation apparatus. This chain is ER protein translocation subcomplex subunit sec67 (sec67), found in Schizosaccharomyces pombe (strain 972 / ATCC 24843) (Fission yeast).